We begin with the raw amino-acid sequence, 96 residues long: MALGNGYYCAVVCVVLACASVVLCAPAQLCAGAADDDPRAARFCQALNTFLELYAEAAGEQVPEYQALVRDYPQLLDTGMKRQDVVHSFLRFGRRR.

The first 24 residues, 1–24, serve as a signal peptide directing secretion; sequence MALGNGYYCAVVCVVLACASVVLC. The propeptide occupies 25 to 80; sequence APAQLCAGAADDDPRAARFCQALNTFLELYAEAAGEQVPEYQALVRDYPQLLDTGM. Q83 is subject to Pyrrolidone carboxylic acid; partial. Residue F92 is modified to Phenylalanine amide. A propeptide is located at residue R96.

This sequence belongs to the myosuppressin family. In terms of tissue distribution, expressed in corpora cardiaca (CC), corpora allata (CA), antennal lobe (AL) and gnathal ganglion (GNG) (at protein level). In its non-pyroglutamate form, expression in GNG detected in all animals, in AL, CC and in CA in most animals (at protein level). In its pyroglutamate form, expression in CC, CA and GNG detected in all animals, in AL in some animals (at protein level).

The protein localises to the secreted. Myoinhibiting neuropeptide. This is Myosuppressin from Agrotis ipsilon (Black cutworm moth).